A 149-amino-acid chain; its full sequence is F420H(2)-dependent quinone reductase MT1299 (149 aa).

Residues 48-50 (AKT), 54-59 (RTTSLT), 70-73 (VASK), 81-85 (GWYHN), and Tyr130 each bind coenzyme F420-(gamma-Glu)n.

Belongs to the F420H(2)-dependent quinone reductase family.

The protein localises to the cell membrane. It carries out the reaction oxidized coenzyme F420-(gamma-L-Glu)(n) + a quinol + H(+) = reduced coenzyme F420-(gamma-L-Glu)(n) + a quinone. Involved in a F420-dependent anti-oxidant mechanism that protects M.tuberculosis against oxidative stress and bactericidal agents. Catalyzes the F420H(2)-dependent two-electron reduction of quinones to dihydroquinones, thereby preventing the formation of cytotoxic semiquinones obtained by the one-electron reduction pathway. In vitro, catalyzes the reduction of menadione to menadiol; since menaquinone is the sole quinone electron carrier in the respiratory chain in M.tuberculosis, the physiological electron acceptor for Fqr-mediated F420H(2) oxidation is therefore likely to be the endogenous menaquinone found in the membrane fraction of M.tuberculosis. The sequence is that of F420H(2)-dependent quinone reductase MT1299 from Mycobacterium tuberculosis (strain CDC 1551 / Oshkosh).